The chain runs to 301 residues: Acetylglutamate kinase (301 aa).

Residues 71–72, Arg-93, and Asn-198 contribute to the substrate site; that span reads GG.

This sequence belongs to the acetylglutamate kinase family. ArgB subfamily.

The protein localises to the cytoplasm. It catalyses the reaction N-acetyl-L-glutamate + ATP = N-acetyl-L-glutamyl 5-phosphate + ADP. The protein operates within amino-acid biosynthesis; L-arginine biosynthesis; N(2)-acetyl-L-ornithine from L-glutamate: step 2/4. Its function is as follows. Catalyzes the ATP-dependent phosphorylation of N-acetyl-L-glutamate. This Rhizorhabdus wittichii (strain DSM 6014 / CCUG 31198 / JCM 15750 / NBRC 105917 / EY 4224 / RW1) (Sphingomonas wittichii) protein is Acetylglutamate kinase.